Reading from the N-terminus, the 603-residue chain is UvrABC system protein C (603 aa).

One can recognise a GIY-YIG domain in the interval 15–92 (DQPGCYLMKD…IKKHDPRFNI (78 aa)). In terms of domain architecture, UVR spans 197–232 (KTVKNDLMKKMQEAAENMEFEKAGEFRDQINAIETT).

The protein belongs to the UvrC family. In terms of assembly, interacts with UvrB in an incision complex.

The protein resides in the cytoplasm. The UvrABC repair system catalyzes the recognition and processing of DNA lesions. UvrC both incises the 5' and 3' sides of the lesion. The N-terminal half is responsible for the 3' incision and the C-terminal half is responsible for the 5' incision. The sequence is that of UvrABC system protein C from Listeria monocytogenes serotype 4b (strain F2365).